A 257-amino-acid chain; its full sequence is UPF0246 protein BPP3440 (257 aa).

This sequence belongs to the UPF0246 family.

The chain is UPF0246 protein BPP3440 from Bordetella parapertussis (strain 12822 / ATCC BAA-587 / NCTC 13253).